Here is a 258-residue protein sequence, read N- to C-terminus: Short-chain dehydrogenase/reductase olcF (258 aa).

3 residues coordinate NADP(+): Val12, Asp58, and Arg120. Ser138 functions as the Proton donor in the catalytic mechanism. NADP(+) contacts are provided by Tyr152, Lys156, and Val185. The Proton acceptor role is filled by Tyr152. Residue Lys156 is the Lowers pKa of active site Tyr of the active site.

Belongs to the short-chain dehydrogenases/reductases (SDR) family.

It functions in the pathway secondary metabolite biosynthesis; terpenoid biosynthesis. Its function is as follows. Short-chain dehydrogenase/reductase; part of the gene cluster that mediates the biosynthesis of 15-deoxyoxalicine B. The first step of the pathway is the synthesis of nicotinyl-CoA from nicotinic acid by the nicotinic acid-CoA ligase olcI. Nicotinyl-CoA is then a substrate of polyketide synthase olcA to produce 4-hydroxy-6-(3-pyridinyl)-2H-pyran-2-one (HPPO) which is further prenylated by the polyprenyl transferase olcH to yield geranylgeranyl-HPPO. Geranylgeranyl pyrophosphate is provided by the cluster-specific geranylgeranyl pyrophosphate synthase olcC. The FAD-dependent monooxygenase olcE catalyzes the epoxidation of geranylgeranyl-HPPO and the terpene cyclase olcD catalyzes the cyclization of the terpenoid component, resulting in the formation of the tricyclic terpene moiety seen in predecaturin E. The cytochrome P450 monooxygenase then catalyzes the allylic oxidation of predecaturin E, which is followed by spirocylization with concomitant loss of one molecule of water to form decaturin E. Decaturin E is the substrate of the cytochrome P450 monooxygenase olcJ which hydroxylates it at the C-29 position to form decaturin F. The short-chain dehydrogenase/reductase olcF may catalyze the oxidation of decaturin F to generate the 29-hydroxyl-27-one intermediate, and subsequent hemiacetal formation probably leads to the formation of decaturin C. The dioxygenase olcK may be a peroxisomal enzyme that catalyzes the hydroxylation of decaturin C into decaturin A once decaturin C is shuttled into the peroxisome by the MFS transporter olcL. Finally the cytochrome P450 monooxygenase olcB catalyzes the oxidative rearrangement to yield 15-deoxyoxalicine B. In the absence of olcJ, decaturin E may be shunted to a pathway in which it is oxidized to a ketone, possibly by olcF, to form decaturin D, which undergoes further allylic oxidation to yield decaturin G. Moreover, in the absence of oclK or oclL, oclB can convert decaturin C into 15-deoxyoxalicine A. The polypeptide is Short-chain dehydrogenase/reductase olcF (Penicillium canescens).